Consider the following 208-residue polypeptide: MSSQVKLTKNAYRLEKVKLSRLETYLPTLKLKKALLQVEVTNAIREASECIQAYEESRESIYAFAELYSVPLYVDAIVNSFKIERVEKEYENVTGVEVPVIKNIVLTESSYSVLDTPIWVDTLVAYSREFVVNKVRSEVAVEKQRILEDELRNVSIRVNLFEKKLIPETTRMIKKIAIFLSDRSITDVGQVKMAKKKIQQRKEESECA.

It belongs to the V-ATPase D subunit family.

Its function is as follows. Produces ATP from ADP in the presence of a proton gradient across the membrane. This Chlamydia abortus (strain DSM 27085 / S26/3) (Chlamydophila abortus) protein is V-type ATP synthase subunit D.